The primary structure comprises 303 residues: Growth/differentiation factor 15 (303 aa).

The signal sequence occupies residues 1 to 30; sequence MAPPALQAQPPGGSQLRFLLFLLLLLLLLS. Positions 31 to 188 are excised as a propeptide; the sequence is WPSQGDALAM…LRVAAGRGRR (158 aa). The N-linked (GlcNAc...) asparagine glycan is linked to Asn71. 4 disulfides stabilise this stretch: Cys198–Cys205, Cys206–Cys269, Cys235–Cys300, and Cys239–Cys302.

Belongs to the TGF-beta family. Homodimer; disulfide-linked. Interacts with GFRAL and RET; ligand of GFRAL, which mediates GDF15 internalization and cellular signaling through interaction with RET via the formation of a 2:2:2 ternary complex composed of GDF15, GFRAL and RET. As to expression, detected in plasma (at protein level). Highly expressed in liver. Expressed in the distal small intestine, colon and kidney. Expressed in skeletal muscle in response to mitochondrial stress. Expressed by cardiomyocytes, expression is highly increased in heart diseases. Also detected in subcutaneous fat.

The protein localises to the secreted. Hormone produced in response to various stresses to confer information about those stresses to the brain, and trigger an aversive response, characterized by nausea and/or loss of appetite. The aversive response is both required to reduce continuing exposure to those stresses at the time of exposure and to promote avoidance behavior in the future. Acts by binding to its receptor, GFRAL, activating GFRAL-expressing neurons localized in the area postrema and nucleus tractus solitarius of the brainstem. It then triggers the activation of neurons localized within the parabrachial nucleus and central amygdala, which constitutes part of the 'emergency circuit' that shapes responses to stressful conditions. The GDF15-GFRAL signal induces expression of genes involved in metabolism, such as lipid metabolism in adipose tissues. Required for avoidance behavior in response to food allergens: induced downstream of mast cell activation to promote aversion and minimize harmful effects of exposure to noxious substances. In addition to suppress appetite, also promotes weight loss by enhancing energy expenditure in muscle: acts by increasing calcium futile cycling in muscle. Contributes to the effect of metformin, an anti-diabetic drug, on appetite reduction and weight loss: produced in the kidney in response to metformin treatment, thereby activating the GDF15-GFRAL response, leading to reduced appetite and weight. Produced in response to anticancer drugs, such as camptothecin or cisplatin, promoting nausea and contributing to malnutrition. Overproduced in many cancers, promoting anorexia in cancer (cachexia). Responsible for the risk of nausea during pregnancy: high levels of GDF15 during pregnancy, mostly originating from embryos, are associated with increased nausea. Maternal sensitivity to nausea is probably determined by pre-pregnancy exposure to GDF15, females with naturally high level of GDF15 being less susceptible to nausea than female mice with low levels of GDF15 before pregnancy. Promotes metabolic adaptation in response to systemic inflammation caused by bacterial and viral infections in order to promote tissue tolerance and prevent tissue damage. Required for tissue tolerance in response to myocardial infarction by acting as an inhibitor of leukocyte integring activation, thereby protecting against cardiac rupture. Inhibits growth hormone signaling on hepatocytes. This is Growth/differentiation factor 15 from Mus musculus (Mouse).